The primary structure comprises 325 residues: NADH-quinone oxidoreductase subunit H (325 aa).

Transmembrane regions (helical) follow at residues 11–31, 81–101, 114–134, 154–174, 186–206, 237–257, 265–285, and 304–324; these read ILLTVLKAVVILLVVVTCGAF, FIFTIAPVIAFSSLLLSFAIV, IGILFFLMVAGLAVYAVLFAG, VSYEVFLGLSILGVVAQAGSF, MWNIIPQFFGFITFAIAGVAV, FFVGEYIGIVAVSGLIVTLFF, LPSFVWFALKTGFFMMMFILI, and ICLPLTLINLLVTAAVILYNA.

This sequence belongs to the complex I subunit 1 family. In terms of assembly, NDH-1 is composed of 13 different subunits. Subunits NuoA, H, J, K, L, M, N constitute the membrane sector of the complex.

It localises to the cell inner membrane. The catalysed reaction is a quinone + NADH + 5 H(+)(in) = a quinol + NAD(+) + 4 H(+)(out). Functionally, NDH-1 shuttles electrons from NADH, via FMN and iron-sulfur (Fe-S) centers, to quinones in the respiratory chain. The immediate electron acceptor for the enzyme in this species is believed to be ubiquinone. Couples the redox reaction to proton translocation (for every two electrons transferred, four hydrogen ions are translocated across the cytoplasmic membrane), and thus conserves the redox energy in a proton gradient. This subunit may bind ubiquinone. In Proteus mirabilis (strain HI4320), this protein is NADH-quinone oxidoreductase subunit H.